The following is a 181-amino-acid chain: ATP-dependent protease subunit HslV (181 aa).

The active site involves Thr-7. Positions 165, 168, and 171 each coordinate Na(+).

It belongs to the peptidase T1B family. HslV subfamily. As to quaternary structure, a double ring-shaped homohexamer of HslV is capped on each side by a ring-shaped HslU homohexamer. The assembly of the HslU/HslV complex is dependent on binding of ATP.

It is found in the cytoplasm. The catalysed reaction is ATP-dependent cleavage of peptide bonds with broad specificity.. Its activity is regulated as follows. Allosterically activated by HslU binding. Protease subunit of a proteasome-like degradation complex believed to be a general protein degrading machinery. In Lysinibacillus sphaericus (strain C3-41), this protein is ATP-dependent protease subunit HslV.